A 113-amino-acid chain; its full sequence is Nucleoid-associated protein SYNW0027 (113 aa).

This sequence belongs to the YbaB/EbfC family. As to quaternary structure, homodimer.

It localises to the cytoplasm. It is found in the nucleoid. Functionally, binds to DNA and alters its conformation. May be involved in regulation of gene expression, nucleoid organization and DNA protection. In Parasynechococcus marenigrum (strain WH8102), this protein is Nucleoid-associated protein SYNW0027.